The sequence spans 549 residues: Probable glucomannan 4-beta-mannosyltransferase 4 (549 aa).

The helical transmembrane segment at Val35 to Leu55 threads the bilayer. Asp151 is an active-site residue. Residues Asp210 and Asp212 each contribute to the substrate site. Asp304 is a catalytic residue. 4 helical membrane passes run Val383–Val403, Val406–Ile426, Ile497–Val517, and Tyr523–Gly543.

This sequence belongs to the glycosyltransferase 2 family. Plant cellulose synthase-like A subfamily.

The protein localises to the golgi apparatus membrane. It catalyses the reaction GDP-mannose + (glucomannan)n = GDP + (glucomannan)n+1.. Probable mannan synthase which consists of a 4-beta-mannosyltransferase activity on mannan using GDP-mannose. The beta-1,4-mannan product is the backbone for galactomannan synthesis by galactomannan galactosyltransferase. Galactomannan is a noncellulosic polysaccharides of plant cell wall. The sequence is that of Probable glucomannan 4-beta-mannosyltransferase 4 from Oryza sativa subsp. japonica (Rice).